The sequence spans 195 residues: Glycerol-3-phosphate acyltransferase (195 aa).

Helical transmembrane passes span 3 to 23 (IHAV…GLIL), 53 to 73 (AVMT…LAKI), 80 to 100 (FAFI…WLLF), 115 to 135 (LIEY…FAIF), and 147 to 167 (IFVA…VFIA).

This sequence belongs to the PlsY family. In terms of assembly, probably interacts with PlsX.

It localises to the cell inner membrane. The catalysed reaction is an acyl phosphate + sn-glycerol 3-phosphate = a 1-acyl-sn-glycero-3-phosphate + phosphate. Its pathway is lipid metabolism; phospholipid metabolism. In terms of biological role, catalyzes the transfer of an acyl group from acyl-phosphate (acyl-PO(4)) to glycerol-3-phosphate (G3P) to form lysophosphatidic acid (LPA). This enzyme utilizes acyl-phosphate as fatty acyl donor, but not acyl-CoA or acyl-ACP. The chain is Glycerol-3-phosphate acyltransferase from Ehrlichia chaffeensis (strain ATCC CRL-10679 / Arkansas).